The chain runs to 582 residues: Glutamine--tRNA ligase (582 aa).

A 'HIGH' region motif is present at residues 50–60; sequence PEPNGYLHIGH. ATP is bound by residues 51-53 and 57-63; these read EPN and HIGHAKS. L-glutamine is bound by residues D83 and Y235. Residues T254 and 289-290 each bind ATP; that span reads RL. A 'KMSKS' region motif is present at residues 296–300; sequence ITSKR.

Belongs to the class-I aminoacyl-tRNA synthetase family. In terms of assembly, monomer.

Its subcellular location is the cytoplasm. The catalysed reaction is tRNA(Gln) + L-glutamine + ATP = L-glutaminyl-tRNA(Gln) + AMP + diphosphate. The sequence is that of Glutamine--tRNA ligase from Cupriavidus metallidurans (strain ATCC 43123 / DSM 2839 / NBRC 102507 / CH34) (Ralstonia metallidurans).